We begin with the raw amino-acid sequence, 225 residues long: Heptaprenylglyceryl phosphate synthase (225 aa).

Sn-glycerol 1-phosphate is bound at residue lysine 6. Mg(2+) is bound by residues aspartate 8 and threonine 34. Sn-glycerol 1-phosphate is bound by residues 153-158 (YVEYSG), glycine 183, and 203-204 (GN).

Belongs to the GGGP/HepGP synthase family. Group I subfamily. In terms of assembly, homodimer. Mg(2+) serves as cofactor.

The enzyme catalyses sn-glycerol 1-phosphate + all-trans-heptaprenyl diphosphate = 3-heptaprenyl-sn-glycero-1-phosphate + diphosphate. The protein operates within membrane lipid metabolism; glycerophospholipid metabolism. Prenyltransferase that catalyzes in vivo the transfer of the heptaprenyl moiety of heptaprenyl pyrophosphate (HepPP; 35 carbon atoms) to the C3 hydroxyl of sn-glycerol-1-phosphate (G1P), producing heptaprenylglyceryl phosphate (HepGP). This reaction is an ether-bond-formation step in the biosynthesis of archaea-type G1P-based membrane lipids found in Bacillales. To a much lesser extent, is also able to use geranylgeranyl diphosphate (GGPP; C20) as the prenyl donor. The protein is Heptaprenylglyceryl phosphate synthase of Listeria monocytogenes serovar 1/2a (strain ATCC BAA-679 / EGD-e).